The sequence spans 273 residues: Dermonecrotic toxin LspaSicTox-alphaIA2iii (273 aa).

Histidine 5 is a catalytic residue. Residues glutamate 25 and aspartate 27 each contribute to the Mg(2+) site. Catalysis depends on histidine 41, which acts as the Nucleophile. Cystine bridges form between cysteine 45/cysteine 51 and cysteine 47/cysteine 190. Aspartate 85 serves as a coordination point for Mg(2+).

The protein belongs to the arthropod phospholipase D family. Class II subfamily. Requires Mg(2+) as cofactor. As to expression, expressed by the venom gland.

Its subcellular location is the secreted. It carries out the reaction an N-(acyl)-sphingosylphosphocholine = an N-(acyl)-sphingosyl-1,3-cyclic phosphate + choline. It catalyses the reaction an N-(acyl)-sphingosylphosphoethanolamine = an N-(acyl)-sphingosyl-1,3-cyclic phosphate + ethanolamine. The catalysed reaction is a 1-acyl-sn-glycero-3-phosphocholine = a 1-acyl-sn-glycero-2,3-cyclic phosphate + choline. The enzyme catalyses a 1-acyl-sn-glycero-3-phosphoethanolamine = a 1-acyl-sn-glycero-2,3-cyclic phosphate + ethanolamine. Dermonecrotic toxins cleave the phosphodiester linkage between the phosphate and headgroup of certain phospholipids (sphingolipid and lysolipid substrates), forming an alcohol (often choline) and a cyclic phosphate. This toxin acts on sphingomyelin (SM). It may also act on ceramide phosphoethanolamine (CPE), lysophosphatidylcholine (LPC) and lysophosphatidylethanolamine (LPE), but not on lysophosphatidylserine (LPS), and lysophosphatidylglycerol (LPG). It acts by transphosphatidylation, releasing exclusively cyclic phosphate products as second products. Induces dermonecrosis, hemolysis, increased vascular permeability, edema, inflammatory response, and platelet aggregation. This is Dermonecrotic toxin LspaSicTox-alphaIA2iii from Loxosceles spadicea (Recluse spider).